The chain runs to 1020 residues: 5'-3' exoribonuclease 3 (1020 aa).

The tract at residues 113–144 is disordered; it reads QQRSRRFRSAKDASDAAAEEERLREEFEREGR. Basic and acidic residues predominate over residues 121-144; it reads SAKDASDAAAEEERLREEFEREGR. The CCHC-type zinc finger occupies 262–279; sequence ERCFLCGQMGHFASNCEG. 2 disordered regions span residues 411–440 and 452–483; these read QHQRQAERVKRDKAGKATKRMDDEAPTVQP and RLASAPTPSPFQSNDGRSAPHQKVRRLSPGSS. A compositionally biased stretch (basic and acidic residues) spans 414–433; the sequence is RQAERVKRDKAGKATKRMDD. Residues 487–523 adopt a coiled-coil conformation; sequence AIVDVENSLESDERENKEELKTKLKELIREKSDAFNS. Over residues 831 to 844 the composition is skewed to low complexity; it reads NNHGMHNNHGMHNN. Disordered regions lie at residues 831–859, 875–897, and 911–1020; these read NNHGMHNNHGMHNNQGRQNPPGSVSGRHL, TDRYQTPTDVPAPGYGYNPPQYV, and PGAQ…RHRY. 2 stretches are compositionally biased toward low complexity: residues 911 to 923 and 960 to 972; these read PGAQGYAQPAPYQ and GNHQNQHQQQQWH. A compositionally biased stretch (basic residues) spans 1000-1020; that stretch reads RGRGRGSHHHHDQGGNPRHRY.

This sequence belongs to the 5'-3' exonuclease family. XRN2/RAT1 subfamily. Expressed in roots, leaves, stems and flowers.

It is found in the nucleus. Possesses 5'-&gt;3' exoribonuclease activity. Acts as an endogenous post-transcriptional gene silencing (PTGS) suppressor. Degrades miRNA-derived loops, excised during miRNA maturation in the nucleus. Required for proper development. Involved in pre-rRNA processing. Involved with XRN2 in the 5'-end exonucleolytic processing of 5.8S and 25S rRNAs. Contributes with XRN2 to polyadenylation-dependent nuclear RNA surveillance. Involved in the degradation of aberrant polyadenylated pre-rRNA through 5'-end processing. This is 5'-3' exoribonuclease 3 from Arabidopsis thaliana (Mouse-ear cress).